Consider the following 542-residue polypeptide: Carbamoyl phosphate synthase large chain, C-terminal section (542 aa).

Residues 1-389 are carbamoyl phosphate synthetic domain; sequence MSDKVLVIGA…WKAQLAAGHE (389 aa). One can recognise an ATP-grasp domain in the interval 122 to 316; the sequence is SKLLKKLGIP…LAKIGTKAIL (195 aa). Positions 158, 197, 199, 204, 230, 231, 232, 233, 273, and 287 each coordinate ATP. Mg(2+)-binding residues include Gln273, Glu287, and Asn289. The Mn(2+) site is built by Gln273, Glu287, and Asn289. Positions 388–542 constitute an MGS-like domain; it reads HELPLEGTAV…KPEELTRYGG (155 aa). The allosteric domain stretch occupies residues 390–542; it reads LPLEGTAVIS…KPEELTRYGG (153 aa).

It belongs to the CarB family. Composed of two chains; the small (or glutamine) chain promotes the hydrolysis of glutamine to ammonia, which is used by the large (or ammonia) chain to synthesize carbamoyl phosphate. Tetramer of heterodimers (alpha,beta)4. The cofactor is Mg(2+). Mn(2+) serves as cofactor.

The catalysed reaction is hydrogencarbonate + L-glutamine + 2 ATP + H2O = carbamoyl phosphate + L-glutamate + 2 ADP + phosphate + 2 H(+). It catalyses the reaction hydrogencarbonate + NH4(+) + 2 ATP = carbamoyl phosphate + 2 ADP + phosphate + 2 H(+). Its pathway is amino-acid biosynthesis; L-arginine biosynthesis; carbamoyl phosphate from bicarbonate: step 1/1. It participates in pyrimidine metabolism; UMP biosynthesis via de novo pathway; (S)-dihydroorotate from bicarbonate: step 1/3. Functionally, large subunit of the glutamine-dependent carbamoyl phosphate synthetase (CPSase). CPSase catalyzes the formation of carbamoyl phosphate from the ammonia moiety of glutamine, carbonate, and phosphate donated by ATP, constituting the first step of 2 biosynthetic pathways, one leading to arginine and/or urea and the other to pyrimidine nucleotides. The large subunit (synthetase) binds the substrates ammonia (free or transferred from glutamine from the small subunit), hydrogencarbonate and ATP and carries out an ATP-coupled ligase reaction, activating hydrogencarbonate by forming carboxy phosphate which reacts with ammonia to form carbamoyl phosphate. The protein is Carbamoyl phosphate synthase large chain, C-terminal section (carB2) of Methanopyrus kandleri (strain AV19 / DSM 6324 / JCM 9639 / NBRC 100938).